We begin with the raw amino-acid sequence, 212 residues long: Adenylate kinase (212 aa).

10 to 15 (GAGKGT) is a binding site for ATP. The segment at 30 to 59 (STGDMFRAAMANQTEMGRLAKSYIDKGELV) is NMP. AMP contacts are provided by residues T31, R36, 57 to 59 (ELV), 86 to 89 (GYPR), and Q93. The segment at 127–159 (GRIINRKTGETFHKVFNPPVDYKEEDYYQREDD) is LID. ATP contacts are provided by residues R128 and 137–138 (TF). R156 and R167 together coordinate AMP. Q195 serves as a coordination point for ATP.

It belongs to the adenylate kinase family. As to quaternary structure, monomer.

The protein resides in the cytoplasm. The catalysed reaction is AMP + ATP = 2 ADP. The protein operates within purine metabolism; AMP biosynthesis via salvage pathway; AMP from ADP: step 1/1. Functionally, catalyzes the reversible transfer of the terminal phosphate group between ATP and AMP. Plays an important role in cellular energy homeostasis and in adenine nucleotide metabolism. The protein is Adenylate kinase of Streptococcus pyogenes serotype M5 (strain Manfredo).